Here is a 670-residue protein sequence, read N- to C-terminus: Oligopeptidase PepF (670 aa).

His456 contributes to the Zn(2+) binding site. Residue Glu457 is part of the active site. The Zn(2+) site is built by His460 and His463.

Belongs to the peptidase M3B family. It depends on Zn(2+) as a cofactor.

It is found in the cytoplasm. In terms of biological role, overexpression results in inhibition of sporulation initiation. This sporulation deficiency could be the result of hydrolysis by PepF of the PhrA peptide, a phosphatase regulator. Thus, overexpression of PepF appears to act at the level of the phosphorelay, most likely through modulation of the negative role played by phosphatases. Overexpression of PepF also affects the activity of the competence and sporulation stimulating factor PhrC. This Bacillus subtilis (strain 168) protein is Oligopeptidase PepF.